A 315-amino-acid chain; its full sequence is Glycine--tRNA ligase alpha subunit (315 aa).

This sequence belongs to the class-II aminoacyl-tRNA synthetase family. As to quaternary structure, tetramer of two alpha and two beta subunits.

The protein localises to the cytoplasm. The enzyme catalyses tRNA(Gly) + glycine + ATP = glycyl-tRNA(Gly) + AMP + diphosphate. The protein is Glycine--tRNA ligase alpha subunit of Pseudomonas paraeruginosa (strain DSM 24068 / PA7) (Pseudomonas aeruginosa (strain PA7)).